The following is a 1187-amino-acid chain: DENN domain and WD repeat-containing protein SCD1 (1187 aa).

In terms of domain architecture, uDENN spans Thr-19–Asp-179. The cDENN domain occupies Ser-199–Leu-330. The 106-residue stretch at Leu-332–Ser-437 folds into the dDENN domain. Disordered regions lie at residues Ser-508–Glu-536 and Ser-765–Trp-793. Basic and acidic residues predominate over residues Asn-526–Glu-536. Residues Ser-779 to Trp-793 are compositionally biased toward polar residues. 8 WD repeats span residues Gly-841–Arg-892, Gly-897–Glu-934, Gly-937–Thr-975, Arg-978–Lys-1017, Gly-1020–Val-1057, Cys-1060–Val-1099, Leu-1104–Val-1141, and Arg-1152–Ile-1187.

In terms of assembly, interacts with FLS2. In terms of tissue distribution, expressed in roots, rosette and cauline leaves, buds and flowers.

The protein localises to the cell membrane. The protein resides in the cytoplasmic vesicle. It localises to the clathrin-coated vesicle. In terms of biological role, involved in growth and development through its role in cytokinesis and polarized cell expansion. Required for plasma membrane internalization. May function in clathrin-mediated membrane trafficking, including plasma membrane endocytosis, essential to both cytokinesis and cell expansion. Acts as a negative regulator of basal resistance against bacteria. The protein is DENN domain and WD repeat-containing protein SCD1 of Arabidopsis thaliana (Mouse-ear cress).